The sequence spans 65 residues: uncharacterized protein (65 aa).

The N-terminal stretch at 1–16 is a signal peptide; that stretch reads MMHVCSLLVSFDVVKS.

This is an uncharacterized protein from Saccharomyces cerevisiae (strain ATCC 204508 / S288c) (Baker's yeast).